A 261-amino-acid chain; its full sequence is tRNA pseudouridine synthase A (261 aa).

Catalysis depends on D51, which acts as the Nucleophile. Residue Y109 participates in substrate binding.

It belongs to the tRNA pseudouridine synthase TruA family. Homodimer.

It carries out the reaction uridine(38/39/40) in tRNA = pseudouridine(38/39/40) in tRNA. In terms of biological role, formation of pseudouridine at positions 38, 39 and 40 in the anticodon stem and loop of transfer RNAs. The chain is tRNA pseudouridine synthase A from Shewanella sediminis (strain HAW-EB3).